We begin with the raw amino-acid sequence, 133 residues long: ATP synthase epsilon chain, chloroplastic (133 aa).

The protein belongs to the ATPase epsilon chain family. F-type ATPases have 2 components, CF(1) - the catalytic core - and CF(0) - the membrane proton channel. CF(1) has five subunits: alpha(3), beta(3), gamma(1), delta(1), epsilon(1). CF(0) has three main subunits: a, b and c.

The protein resides in the plastid. It is found in the chloroplast thylakoid membrane. Its function is as follows. Produces ATP from ADP in the presence of a proton gradient across the membrane. The protein is ATP synthase epsilon chain, chloroplastic of Piper cenocladum (Ant piper).